We begin with the raw amino-acid sequence, 648 residues long: Macrolide export ATP-binding/permease protein MacB (648 aa).

The Cytoplasmic segment spans residues 1-272 (MTPLLELKDI…RALAANKMRT (272 aa)). The region spanning 5-243 (LELKDIRRSY…TGGTEPVVNT (239 aa)) is the ABC transporter domain. 41–48 (GASGSGKS) is an ATP binding site. The helical transmembrane segment at 273 to 293 (LLTMLGIIIGIASVVSIVVVG) threads the bilayer. The Periplasmic portion of the chain corresponds to 294–522 (DAAKQMVLAD…TVEKTTRTLQ (229 aa)). Residues 523–543 (LFLTLVAVISLVVGGIGVMNI) traverse the membrane as a helical segment. Topologically, residues 544 to 575 (MLVSVTERTREIGIRMAVGARASDVLQQFLIE) are cytoplasmic. A helical transmembrane segment spans residues 576-596 (AVLVCLVGGALGITLSLLIAF). At 597–610 (TLQLFLPGWEIGFS) the chain is on the periplasmic side. The chain crosses the membrane as a helical span at residues 611-631 (PLALLLAFLCSTVTGILFGWL). Residues 632–648 (PARNAARLDPVDALARE) lie on the Cytoplasmic side of the membrane.

Belongs to the ABC transporter superfamily. Macrolide exporter (TC 3.A.1.122) family. As to quaternary structure, homodimer. Part of the tripartite efflux system MacAB-TolC, which is composed of an inner membrane transporter, MacB, a periplasmic membrane fusion protein, MacA, and an outer membrane component, TolC. The complex forms a large protein conduit and can translocate molecules across both the inner and outer membranes. Interacts with MacA.

Its subcellular location is the cell inner membrane. With respect to regulation, ATPase activity is stimulated by interaction with MacA and inhibited by vanadate. Part of the tripartite efflux system MacAB-TolC. MacB is a non-canonical ABC transporter that contains transmembrane domains (TMD), which form a pore in the inner membrane, and an ATP-binding domain (NBD), which is responsible for energy generation. When overexpressed, the system confers resistance against macrolides composed of 14- and 15-membered lactones but no or weak resistance against 16-membered ones. In addition, the system could also transport R-LPS or a similar glycolipid. The chain is Macrolide export ATP-binding/permease protein MacB from Escherichia coli (strain K12).